The chain runs to 434 residues: Histidinol dehydrogenase (434 aa).

Positions 129, 191, and 214 each coordinate NAD(+). The substrate site is built by Ser-240, Gln-262, and His-265. Residues Gln-262 and His-265 each coordinate Zn(2+). Catalysis depends on proton acceptor residues Glu-329 and His-330. Substrate is bound by residues His-330, Asp-363, Glu-417, and His-422. A Zn(2+)-binding site is contributed by Asp-363. His-422 is a binding site for Zn(2+).

Belongs to the histidinol dehydrogenase family. It depends on Zn(2+) as a cofactor.

The enzyme catalyses L-histidinol + 2 NAD(+) + H2O = L-histidine + 2 NADH + 3 H(+). Its pathway is amino-acid biosynthesis; L-histidine biosynthesis; L-histidine from 5-phospho-alpha-D-ribose 1-diphosphate: step 9/9. Its function is as follows. Catalyzes the sequential NAD-dependent oxidations of L-histidinol to L-histidinaldehyde and then to L-histidine. This chain is Histidinol dehydrogenase, found in Colwellia psychrerythraea (strain 34H / ATCC BAA-681) (Vibrio psychroerythus).